A 478-amino-acid chain; its full sequence is Putative indole-3-acetic acid-amido synthetase GH3.10 (478 aa).

Belongs to the IAA-amido conjugating enzyme family.

Its function is as follows. May catalyze the synthesis of indole-3-acetic acid (IAA)-amino acid conjugates, providing a mechanism for the plant to cope with the presence of excess auxin. The polypeptide is Putative indole-3-acetic acid-amido synthetase GH3.10 (GH3.10) (Oryza sativa subsp. japonica (Rice)).